The chain runs to 753 residues: Ribosome biogenesis protein BOP1 homolog (753 aa).

Residues Met-1 to Lys-155 are disordered. Composition is skewed to basic and acidic residues over residues Gly-7 to Ser-18 and Lys-30 to Asp-41. Composition is skewed to acidic residues over residues Asp-64–Asp-75 and Glu-83–Gly-109. The span at Ser-110–His-121 shows a compositional bias: basic and acidic residues. A compositionally biased stretch (acidic residues) spans Gly-122 to Glu-142. WD repeat units follow at residues Gly-421–Gln-462, Asp-464–Gln-502, Arg-539–Leu-581, Thr-626–Lys-665, Asn-669–Gln-708, and Ser-722–His-753.

The protein belongs to the WD repeat BOP1/ERB1 family. In terms of assembly, interacts with PES. Interacts with WDR12.

It is found in the nucleus. Its subcellular location is the nucleolus. It localises to the nucleoplasm. In terms of biological role, required for maturation of ribosomal RNAs and formation of the large ribosomal subunit. Plays an essential role in cell growth and survival through its regulation of ribosome biogenesis and mitotic progression. This Arabidopsis thaliana (Mouse-ear cress) protein is Ribosome biogenesis protein BOP1 homolog.